The primary structure comprises 606 residues: Chaperone protein DnaK (606 aa).

Thr-174 is modified (phosphothreonine; by autocatalysis). Residues 576-606 (QAAGSANPGGSQGTSQGNVYEADYKVEDDNK) form a disordered region. The segment covering 597-606 (ADYKVEDDNK) has biased composition (basic and acidic residues).

The protein belongs to the heat shock protein 70 family.

Acts as a chaperone. This chain is Chaperone protein DnaK, found in Caldanaerobacter subterraneus subsp. tengcongensis (strain DSM 15242 / JCM 11007 / NBRC 100824 / MB4) (Thermoanaerobacter tengcongensis).